We begin with the raw amino-acid sequence, 105 residues long: Small ribosomal subunit protein uS10c (105 aa).

This sequence belongs to the universal ribosomal protein uS10 family. In terms of assembly, part of the 30S ribosomal subunit.

Its subcellular location is the plastid. It is found in the chloroplast. Its function is as follows. Involved in the binding of tRNA to the ribosomes. In Pyropia yezoensis (Susabi-nori), this protein is Small ribosomal subunit protein uS10c.